Here is a 75-residue protein sequence, read N- to C-terminus: Small ribosomal subunit protein bS18c (75 aa).

Belongs to the bacterial ribosomal protein bS18 family. Part of the 30S ribosomal subunit.

Its subcellular location is the plastid. It localises to the chloroplast. The protein is Small ribosomal subunit protein bS18c of Angiopteris evecta (Mule's foot fern).